Reading from the N-terminus, the 370-residue chain is Histidinol-phosphate aminotransferase 1 (370 aa).

Position 222 is an N6-(pyridoxal phosphate)lysine (K222).

It belongs to the class-II pyridoxal-phosphate-dependent aminotransferase family. Histidinol-phosphate aminotransferase subfamily. As to quaternary structure, homodimer. The cofactor is pyridoxal 5'-phosphate.

The enzyme catalyses L-histidinol phosphate + 2-oxoglutarate = 3-(imidazol-4-yl)-2-oxopropyl phosphate + L-glutamate. The protein operates within amino-acid biosynthesis; L-histidine biosynthesis; L-histidine from 5-phospho-alpha-D-ribose 1-diphosphate: step 7/9. The chain is Histidinol-phosphate aminotransferase 1 (hisC1) from Bacillus anthracis.